Consider the following 432-residue polypeptide: Amino-acid acetyltransferase (432 aa).

Positions 286 to 425 (ELVREAAIED…ASLYNYQRNS (140 aa)) constitute an N-acetyltransferase domain.

It belongs to the acetyltransferase family. ArgA subfamily.

It is found in the cytoplasm. It carries out the reaction L-glutamate + acetyl-CoA = N-acetyl-L-glutamate + CoA + H(+). The protein operates within amino-acid biosynthesis; L-arginine biosynthesis; N(2)-acetyl-L-ornithine from L-glutamate: step 1/4. The protein is Amino-acid acetyltransferase of Pseudomonas fluorescens (strain Pf0-1).